The chain runs to 59 residues: Cecropin-C type 2 (59 aa).

Residues 1-23 (MNFAKVFVLVAMAVLLLVGQSEA) form the signal peptide.

This sequence belongs to the cecropin family.

The protein localises to the secreted. Functionally, cecropins have lytic and antibacterial activity against several Gram-positive and Gram-negative bacteria. The sequence is that of Cecropin-C type 2 (CECC2) from Aedes albopictus (Asian tiger mosquito).